The sequence spans 374 residues: Cyclin-dependent kinase 9 (374 aa).

The Protein kinase domain occupies 19–318 (YEKLAKIGQG…SDDALNHDFF (300 aa)). ATP contacts are provided by residues 25–33 (IGQGTFGEV) and Lys-48. Asp-151 serves as the catalytic Proton acceptor. Residues 345–374 (PRRRGHMPQQPANQNRNPATTSQSEFDRVF) are disordered. The span at 354-368 (QPANQNRNPATTSQS) shows a compositional bias: polar residues.

This sequence belongs to the protein kinase superfamily. CMGC Ser/Thr protein kinase family. CDC2/CDKX subfamily. As to quaternary structure, component of the super elongation complex (SEC). Associates with ccnt1/cyclin-T1, ccnt2/cyclin-T2 or ccnk/cyclin-K to form active P-TEFb.

It localises to the nucleus. It is found in the cytoplasm. Its subcellular location is the PML body. It catalyses the reaction L-seryl-[protein] + ATP = O-phospho-L-seryl-[protein] + ADP + H(+). It carries out the reaction L-threonyl-[protein] + ATP = O-phospho-L-threonyl-[protein] + ADP + H(+). The catalysed reaction is [DNA-directed RNA polymerase] + ATP = phospho-[DNA-directed RNA polymerase] + ADP + H(+). Functionally, protein kinase involved in the regulation of transcription. Member of the cyclin-dependent kinase pair (CDK9/cyclin-T) complex, also called positive transcription elongation factor b (P-TEFb), which facilitates the transition from abortive to productive elongation by phosphorylating the CTD (C-terminal domain) of the large subunit of RNA polymerase II (RNAP II) polr2a, supt5h and rdbp. This complex is inactive when in the 7SK snRNP complex form. Regulates cytokine inducible transcription networks by facilitating promoter recognition of target transcription factors. P-TEFb is also involved in cotranscriptional histone modification, mRNA processing and mRNA export. This is Cyclin-dependent kinase 9 from Danio rerio (Zebrafish).